The following is a 553-amino-acid chain: Putative transport protein AHA_3492 (553 aa).

A run of 5 helical transmembrane segments spans residues 4-24 (IALSISMLSLVAVLGLWLGNW), 29-49 (VGLGIGGVLFGGIIVGHFAGL), 65-85 (FGLILFVYTIGIQVGPGFFSS), 95-115 (GFAALLVLLGCAVAAALHQLF), and 158-178 (MGYAVAYPFGICGILLTMWLI). 2 RCK C-terminal domains span residues 191-276 (AQFE…VLGE) and 279-361 (ETSL…VVGN). 6 helical membrane-spanning segments follow: residues 371-391 (MLPVFIGIGLGVLLGSIPFYL), 403-425 (AGGPLVVALILSRIGSIGKLYWF), 439-459 (IVLFLAVVGFKSGAGFIDTLI), 465-485 (AWMMYGVAITLIPLLVVGVLA), 493-513 (YLTLCGLLAGSMTDPPALAFA), and 533-553 (LVMFLRIISPQLLAILLWAGA).

This sequence belongs to the AAE transporter (TC 2.A.81) family. YidE subfamily.

The protein localises to the cell membrane. This chain is Putative transport protein AHA_3492, found in Aeromonas hydrophila subsp. hydrophila (strain ATCC 7966 / DSM 30187 / BCRC 13018 / CCUG 14551 / JCM 1027 / KCTC 2358 / NCIMB 9240 / NCTC 8049).